The primary structure comprises 1088 residues: RNA-directed RNA polymerase (1088 aa).

Residues 501-687 (LSYGDVTRFL…AKRYIAGGKI (187 aa)) form the RdRp catalytic domain.

Belongs to the reoviridae RNA-directed RNA polymerase family. Interacts with VP3 (Potential). Interacts with VP2; this interaction activates VP1. Interacts with NSP5; this interaction is probably necessary for the formation of functional virus factories. Interacts with NSP2; this interaction is weak. Mg(2+) is required as a cofactor.

It localises to the virion. The catalysed reaction is RNA(n) + a ribonucleoside 5'-triphosphate = RNA(n+1) + diphosphate. RNA-directed RNA polymerase that is involved in both transcription and genome replication. Together with VP3 capping enzyme, forms an enzyme complex positioned near the channels situated at each of the five-fold vertices of the core. Following infection, the outermost layer of the virus is lost, leaving a double-layered particle (DLP) made up of the core and VP6 shell. VP1 then catalyzes the transcription of fully conservative plus-strand genomic RNAs that are extruded through the DLP's channels into the cytoplasm where they function as mRNAs for translation of viral proteins. One copy of each of the viral (+)RNAs is also recruited during core assembly, together with newly synthesized polymerase complexes and VP2. The polymerase of these novo-formed particles catalyzes the synthesis of complementary minus-strands leading to dsRNA formation. To do so, the polymerase specifically recognizes and binds 4 bases 5'-UGUG-3' in the conserved 3'-sequence of plus-strand RNA templates. VP2 presumably activates the autoinhibited VP1-RNA complex to coordinate packaging and genome replication. Once dsRNA synthesis is complete, the polymerase switches to the transcriptional mode, thus providing secondary transcription. The chain is RNA-directed RNA polymerase from Rotavirus A (strain RVA/Cow/United States/NCDV-Lincoln/1969/G6P6[1]) (RV-A).